Consider the following 523-residue polypeptide: Cytochrome b5 reductase 4 (523 aa).

The 77-residue stretch at 54–130 folds into the Cytochrome b5 heme-binding domain; the sequence is LIDVTEEELA…LKECLIGRMA (77 aa). Residues His89 and His112 each coordinate heme. The CS domain maps to 167 to 258; the sequence is ESHPWYDWFQ…KEPVSWKSLG (92 aa). In terms of domain architecture, FAD-binding FR-type spans 275–387; the sequence is LYYRKCRLAS…SNPQGTFSSF (113 aa). FAD is bound by residues 367 to 382 and 394 to 426; these read ENLTVGDYISISNPQG and DVFLVAAGTGITPMIRLLQHVLTCVSSLRKAKL.

Belongs to the flavoprotein pyridine nucleotide cytochrome reductase family. It depends on FAD as a cofactor.

The protein localises to the endoplasmic reticulum. The catalysed reaction is 2 Fe(III)-[cytochrome b5] + NADH = 2 Fe(II)-[cytochrome b5] + NAD(+) + H(+). NADH-cytochrome b5 reductase involved in endoplasmic reticulum stress response pathway. This chain is Cytochrome b5 reductase 4 (cyb5r4), found in Xenopus tropicalis (Western clawed frog).